We begin with the raw amino-acid sequence, 591 residues long: Potassium-transporting ATPase potassium-binding subunit (591 aa).

10 consecutive transmembrane segments (helical) span residues 6-26 (WFQI…LGVF), 63-83 (WTEY…MLYI), 137-157 (GLAY…IAFI), 179-199 (VLWV…SQGV), 272-292 (LSNL…TYTL), 303-323 (WAVW…VYWA), 405-425 (AGMY…GLMV), 444-464 (AMLV…ISSV), 510-530 (VAIG…MLAI), and 553-573 (LFSV…FFPA).

It belongs to the KdpA family. In terms of assembly, the system is composed of three essential subunits: KdpA, KdpB and KdpC.

The protein resides in the cell inner membrane. Its function is as follows. Part of the high-affinity ATP-driven potassium transport (or Kdp) system, which catalyzes the hydrolysis of ATP coupled with the electrogenic transport of potassium into the cytoplasm. This subunit binds the periplasmic potassium ions and delivers the ions to the membrane domain of KdpB through an intramembrane tunnel. This chain is Potassium-transporting ATPase potassium-binding subunit, found in Koribacter versatilis (strain Ellin345).